A 362-amino-acid polypeptide reads, in one-letter code: Quinolone epoxide rearrangement protein penF (362 aa).

His220 is an active-site residue. Glu222 functions as the Broensted acid in the catalytic mechanism.

It belongs to the quinolone epoxide rearrangement protein penF family.

It catalyses the reaction [(1'E)-5'-(3',3'-dimethyloxiran-2'-yl)-3'-hydroxy-3'-methylpent-1'-en-1'-yl]-quinolinone B = yaequinolone D. It functions in the pathway secondary metabolite biosynthesis. The protein operates within alkaloid biosynthesis. It participates in mycotoxin biosynthesis. Quinolone epoxide rearrangement protein; part of the gene cluster that mediates the biosynthesis of penigequinolones, potent insecticidal alkaloids that contain a highly modified 10-carbon prenyl group. The first stage is catalyzed by the nonribosomal peptide synthetase penN that condenses anthranilic acid and O-methyl-L-tyrosine to produce 4'-methoxycyclopeptin. 4'-methoxycyclopeptin is then converted to 4'-methoxydehydrocyclopeptin by the ketoglutarate-dependent dioxygenase penM through dehydrogenation to form a double bond between C-alpha and C-beta of the O-methyltyrosine side chain. PenM also converts its first product methoxydehydrocyclopeptin to 4'-methoxycyclopenin. The following conversion of 4'methoxycyclopenin into 4'-methoxyviridicatin is catalyzed by the cyclopenase penL. 4'-methoxyviridicatin is the precursor of quinolone natural products, and is further converted to quinolinone B. The prenyltransferase penI then catalyzes the canonical Friedel-Crafts alkylation of quinolinone B with dimethylallyl cation to yield dimethylallyl quinolone, which is subjected to FAD-dependent dehydrogenation by the FAD-linked oxidoreductase penH to yield conjugated aryl diene. The delta(3') double bond then serves as the site of the second alkylation with DMAPP catalyzed by the prenyltransferase penG to yield a carbenium ion intermediate, which can be attacked by H(2)O to yield a styrenyl quinolone containing a C3'-hydroxyprenyl chain, or undergo cyclization to yield yaequinolones J1 and J2. The conversion of the styrenyl quinolone into the tetrahydrofuran-containing yaequinolone C is performed by the FAD-dependent monooxygenase penE and involves epoxidation of the terminal C7'-C8' olefin, followed by epoxide ring opening initiated by the C3' hydroxyl group. The predicted cysteine hydrolase penJ acts as an epoxide hydrolase that enhances the rate of the 5-exo-tet cyclization step, increasing the yield of yaequinolone C. PenF catalyzes the cationic rearrangement of the epoxide formed by penE (before ring opening to produce yaequinolone C) into yaequinolone D. Finally, the short-chain dehydrogenase/reductase (SDR)-like reductase penD, catalyzes both the dehydration of yaequinolone D and the reduction of the resulting oxonium to yield penigequinolone. The protein is Quinolone epoxide rearrangement protein penF of Penicillium thymicola.